Here is a 129-residue protein sequence, read N- to C-terminus: Putative transmembrane protein 10 (129 aa).

3 helical membrane-spanning segments follow: residues 3 to 23 (NFSY…AFAG), 27 to 47 (LLVG…LSSL), and 85 to 105 (SSVL…FFVF).

The protein localises to the host membrane. The chain is Putative transmembrane protein 10 (SIFV0010) from Sulfolobus islandicus filamentous virus (isolate Iceland/Hveragerdi) (SIFV).